We begin with the raw amino-acid sequence, 132 residues long: Large ribosomal subunit protein uL14 (132 aa).

This sequence belongs to the universal ribosomal protein uL14 family. As to quaternary structure, part of the 50S ribosomal subunit. Forms a cluster with proteins L3 and L24e, part of which may contact the 16S rRNA in 2 intersubunit bridges.

Binds to 23S rRNA. Forms part of two intersubunit bridges in the 70S ribosome. The sequence is that of Large ribosomal subunit protein uL14 from Methanococcus vannielii.